The following is a 544-amino-acid chain: Chaperonin GroEL 3 (544 aa).

Residues 30 to 33, Lys-51, 87 to 91, Gly-415, and Asp-496 each bind ATP; these read TLGP and DGTTT.

This sequence belongs to the chaperonin (HSP60) family. As to quaternary structure, forms a cylinder of 14 subunits composed of two heptameric rings stacked back-to-back. Interacts with the co-chaperonin GroES.

The protein resides in the cytoplasm. It catalyses the reaction ATP + H2O + a folded polypeptide = ADP + phosphate + an unfolded polypeptide.. Together with its co-chaperonin GroES, plays an essential role in assisting protein folding. The GroEL-GroES system forms a nano-cage that allows encapsulation of the non-native substrate proteins and provides a physical environment optimized to promote and accelerate protein folding. This is Chaperonin GroEL 3 from Rhizobium etli (strain ATCC 51251 / DSM 11541 / JCM 21823 / NBRC 15573 / CFN 42).